A 202-amino-acid chain; its full sequence is Nucleoside triphosphate pyrophosphatase (202 aa).

D79 acts as the Proton acceptor in catalysis.

This sequence belongs to the Maf family. The cofactor is a divalent metal cation.

It localises to the cytoplasm. The enzyme catalyses a ribonucleoside 5'-triphosphate + H2O = a ribonucleoside 5'-phosphate + diphosphate + H(+). It carries out the reaction a 2'-deoxyribonucleoside 5'-triphosphate + H2O = a 2'-deoxyribonucleoside 5'-phosphate + diphosphate + H(+). Functionally, nucleoside triphosphate pyrophosphatase. May have a dual role in cell division arrest and in preventing the incorporation of modified nucleotides into cellular nucleic acids. The chain is Nucleoside triphosphate pyrophosphatase from Rhodospirillum rubrum (strain ATCC 11170 / ATH 1.1.1 / DSM 467 / LMG 4362 / NCIMB 8255 / S1).